The chain runs to 117 residues: Large ribosomal subunit protein bL20 (117 aa).

This sequence belongs to the bacterial ribosomal protein bL20 family.

Functionally, binds directly to 23S ribosomal RNA and is necessary for the in vitro assembly process of the 50S ribosomal subunit. It is not involved in the protein synthesizing functions of that subunit. The polypeptide is Large ribosomal subunit protein bL20 (Rickettsia bellii (strain OSU 85-389)).